A 108-amino-acid polypeptide reads, in one-letter code: Dormancy-associated protein homolog 1 (108 aa).

The tract at residues 28–59 (DIKGVGEGSSSKTVAAVAGSPGTPTTPGSARK) is disordered. Ser-47 carries the post-translational modification Phosphoserine. Position 50 is a phosphothreonine (Thr-50).

It belongs to the DRM1/ARP family. Expressed mainly in the low bolt.

The chain is Dormancy-associated protein homolog 1 from Arabidopsis thaliana (Mouse-ear cress).